A 626-amino-acid chain; its full sequence is Pheromone B alpha 3 receptor (626 aa).

The next 7 membrane-spanning stretches (helical) occupy residues 8–28 (LFPT…PWHL), 36–56 (CFFM…SIVW), 70–90 (ISIR…LCII), 113–133 (IIID…MQYI), 163–183 (IWPV…LIEF), 208–228 (LMAL…FVIV), and 271–291 (ELTR…FGFA). 4 disordered regions span residues 363-409 (KQYT…SSPI), 481-509 (ATFT…SSSA), 524-549 (STTD…RLPS), and 571-626 (QDVA…RASV). Low complexity predominate over residues 376-391 (SSSGFSSSESTRFGSS). Residues 574 to 606 (ATGTAAPTTTAPAPASTTIAPATTTATAPTTTA) show a composition bias toward low complexity.

Belongs to the G-protein coupled receptor 4 family.

The protein localises to the membrane. Functionally, receptor for the BAP3 pheromone, a prenylated mating factor. The chain is Pheromone B alpha 3 receptor (BAR3) from Schizophyllum commune (strain H4-8 / FGSC 9210) (Split gill fungus).